The following is a 324-amino-acid chain: Phosphatidylinositol N-acetylglucosaminyltransferase GPI2 subunit (324 aa).

Topologically, residues 1-79 (MDEVCAAPAP…TDFWSLVADS (79 aa)) are cytoplasmic. A helical membrane pass occupies residues 80 to 100 (LPVSQHLSSVVIFASVFVSIY). Residues 101-107 (RNQLSCA) are Lumenal-facing. Residues 108-128 (LVGFVSNVSAVAAFILWDFVL) form a helical membrane-spanning segment. Topologically, residues 129–140 (RKPCNNRTFPNY) are cytoplasmic. The helical transmembrane segment at 141 to 161 (MGIVKSCILIVLTLAGLSPIL) threads the bilayer. Topologically, residues 162-171 (MSLTKSTSPD) are lumenal. A helical membrane pass occupies residues 172 to 192 (SVWAIAVWLFLANVFFHEYTT). Topologically, residues 193-223 (ETIRPHVRLHNSLSTNAALSASVVLASRLEK) are cytoplasmic. A helical membrane pass occupies residues 224-244 (SINVFFFILFAVHWFALFPIF). The Lumenal segment spans residues 245–250 (RKYIHV). Residues 251 to 271 (FSFYADMLMTLVLIISAYIAL) traverse the membrane as a helical segment. Topologically, residues 272–276 (NAVAS) are cytoplasmic. The chain crosses the membrane as a helical span at residues 277–299 (VVIAFVFLSLIFFISFICPIWFI). Over 300–324 (KLQRFKNEIHGPWDIALPKLGPSKG) the chain is Lumenal.

It belongs to the PIGC family.

It is found in the endoplasmic reticulum membrane. The catalysed reaction is a 1,2-diacyl-sn-glycero-3-phospho-(1D-myo-inositol) + UDP-N-acetyl-alpha-D-glucosamine = a 6-(N-acetyl-alpha-D-glucosaminyl)-1-(1,2-diacyl-sn-glycero-3-phospho)-1D-myo-inositol + UDP + H(+). The protein operates within glycolipid biosynthesis; glycosylphosphatidylinositol-anchor biosynthesis. Functionally, part of the complex catalyzing the transfer of N-acetylglucosamine from UDP-N-acetylglucosamine to phosphatidylinositol, the first step of GPI biosynthesis. In Schizosaccharomyces pombe (strain 972 / ATCC 24843) (Fission yeast), this protein is Phosphatidylinositol N-acetylglucosaminyltransferase GPI2 subunit (gpi2).